The chain runs to 149 residues: Transcriptional repressor NrdR (149 aa).

Residues 3–34 (CPFCFAVDTKVIDSRLVGGGSSVRRRRQCLVC) fold into a zinc finger. The ATP-cone domain occupies 49–139 (PRVVKSNDVR…VYRSFEDIKE (91 aa)).

The protein belongs to the NrdR family. Zn(2+) serves as cofactor.

Its function is as follows. Negatively regulates transcription of bacterial ribonucleotide reductase nrd genes and operons by binding to NrdR-boxes. In Shigella boydii serotype 18 (strain CDC 3083-94 / BS512), this protein is Transcriptional repressor NrdR.